The primary structure comprises 285 residues: E2F-associated phosphoprotein (285 aa).

Position 1 is an N-acetylmethionine (Met-1). The segment at 1-30 (MNRLPDDYDPYAVEEPSDEEPALSSSEDEV) is disordered. A compositionally biased stretch (acidic residues) spans 15-30 (EPSDEEPALSSSEDEV). Ser-17 carries the post-translational modification Phosphoserine. At Thr-37 the chain carries Phosphothreonine. The interval 48–96 (CLTGESESSSEDEFEKEMEAELNSTMKTMEDKLSSLGTGSSSGNGKVAT) is disordered. Residues 55-67 (SSSEDEFEKEMEA) are compositionally biased toward acidic residues. The span at 81–92 (SSLGTGSSSGNG) shows a compositional bias: low complexity. 2 positions are modified to phosphoserine: Ser-109 and Ser-111. Residues 118 to 144 (VQVTKKKKKKQHKIPTNDELLYDPEKD) are disordered. Residues 121 to 130 (TKKKKKKQHK) show a composition bias toward basic residues.

In terms of assembly, interacts with E2F1. The C-terminal half binds the N-terminal of E2F1. Also interacts with E2F2 and E2F3, but not E2F4. Ubiquitously expressed. Highest levels in heart, placenta, skeletal muscle and pancreas. Lower levels in brain, lung and kidney. In the brain, expressed in all regions with high levels in the cerebellum and cerebral cortex. Expressed in COS1 and transformed skin fibroblasts.

It is found in the cytoplasm. The protein resides in the nucleus. In terms of biological role, may play an important role in the fine-tuning of both major E2F1 activities, the regulation of the cell-cycle and the induction of apoptosis. Promotes S-phase entry, and inhibits p14(ARP) expression. In Homo sapiens (Human), this protein is E2F-associated phosphoprotein (EAPP).